Reading from the N-terminus, the 107-residue chain is UPF0060 membrane protein Sala_0701 (107 aa).

4 helical membrane-spanning segments follow: residues Phe4–Leu24, Val30–Val50, Ala60–Ala80, and Leu87–Gly107.

This sequence belongs to the UPF0060 family.

It is found in the cell inner membrane. This Sphingopyxis alaskensis (strain DSM 13593 / LMG 18877 / RB2256) (Sphingomonas alaskensis) protein is UPF0060 membrane protein Sala_0701.